The chain runs to 107 residues: uncharacterized protein (107 aa).

The span at 80-98 (SIDNLKPTSHQNGTTNDTA) shows a compositional bias: polar residues. The segment at 80 to 107 (SIDNLKPTSHQNGTTNDTATMDHLEKNE) is disordered.

This is an uncharacterized protein from Human spumaretrovirus (SFVcpz(hu)).